A 321-amino-acid polypeptide reads, in one-letter code: Peroxidase 28 (321 aa).

Residues 1 to 21 (MKIATFSVLLLLLFIFPVALA) form the signal peptide. 4 disulfides stabilise this stretch: cysteine 32–cysteine 111, cysteine 65–cysteine 70, cysteine 117–cysteine 317, and cysteine 196–cysteine 228. The active-site Proton acceptor is the histidine 63. The Ca(2+) site is built by aspartate 64, valine 67, glycine 69, aspartate 71, and serine 73. Proline 159 provides a ligand contact to substrate. Histidine 189 serves as a coordination point for heme b. Residue threonine 190 coordinates Ca(2+). 3 residues coordinate Ca(2+): aspartate 238, threonine 244, and aspartate 249.

Belongs to the peroxidase family. Classical plant (class III) peroxidase subfamily. Heme b is required as a cofactor. It depends on Ca(2+) as a cofactor.

The protein localises to the secreted. The catalysed reaction is 2 a phenolic donor + H2O2 = 2 a phenolic radical donor + 2 H2O. Functionally, removal of H(2)O(2), oxidation of toxic reductants, biosynthesis and degradation of lignin, suberization, auxin catabolism, response to environmental stresses such as wounding, pathogen attack and oxidative stress. These functions might be dependent on each isozyme/isoform in each plant tissue. The chain is Peroxidase 28 (PER28) from Arabidopsis thaliana (Mouse-ear cress).